Here is a 444-residue protein sequence, read N- to C-terminus: 23S rRNA (uracil(1939)-C(5))-methyltransferase RlmD (444 aa).

The 63-residue stretch at 5 to 67 folds into the TRAM domain; that stretch reads RNRLDRTPFQ…RHFDEAKTVG (63 aa). [4Fe-4S] cluster-binding residues include Cys80, Cys86, Cys89, and Cys168. S-adenosyl-L-methionine-binding residues include Gln276, Phe305, Asn310, Glu326, Asp353, and Asp374. Cys400 acts as the Nucleophile in catalysis.

The protein belongs to the class I-like SAM-binding methyltransferase superfamily. RNA M5U methyltransferase family. RlmD subfamily.

The catalysed reaction is uridine(1939) in 23S rRNA + S-adenosyl-L-methionine = 5-methyluridine(1939) in 23S rRNA + S-adenosyl-L-homocysteine + H(+). Functionally, catalyzes the formation of 5-methyl-uridine at position 1939 (m5U1939) in 23S rRNA. The protein is 23S rRNA (uracil(1939)-C(5))-methyltransferase RlmD of Xanthomonas axonopodis pv. citri (strain 306).